Here is a 176-residue protein sequence, read N- to C-terminus: Ribosome maturation factor RimM (176 aa).

Residues 95 to 169 (EDEVYLFELE…TARIAPPPGL (75 aa)) form the PRC barrel domain.

Belongs to the RimM family. In terms of assembly, binds ribosomal protein uS19.

The protein resides in the cytoplasm. Functionally, an accessory protein needed during the final step in the assembly of 30S ribosomal subunit, possibly for assembly of the head region. Essential for efficient processing of 16S rRNA. May be needed both before and after RbfA during the maturation of 16S rRNA. It has affinity for free ribosomal 30S subunits but not for 70S ribosomes. The sequence is that of Ribosome maturation factor RimM from Nitratidesulfovibrio vulgaris (strain ATCC 29579 / DSM 644 / CCUG 34227 / NCIMB 8303 / VKM B-1760 / Hildenborough) (Desulfovibrio vulgaris).